Consider the following 469-residue polypeptide: Diaminopimelate decarboxylase (469 aa).

Positions 1 to 23 (MLSTEMPLPTTGSTLLKTPASPS) are disordered. Lys-93 is modified (N6-(pyridoxal phosphate)lysine). Residues Gly-279 and 321-324 (EPGR) each bind pyridoxal 5'-phosphate. Residues Arg-324, Arg-361, and Tyr-365 each coordinate substrate. Catalysis depends on Cys-392, which acts as the Proton donor. 2 residues coordinate substrate: Glu-393 and Tyr-421. Residue Tyr-421 participates in pyridoxal 5'-phosphate binding.

This sequence belongs to the Orn/Lys/Arg decarboxylase class-II family. LysA subfamily. As to quaternary structure, homodimer. Pyridoxal 5'-phosphate is required as a cofactor.

The enzyme catalyses meso-2,6-diaminopimelate + H(+) = L-lysine + CO2. The protein operates within amino-acid biosynthesis; L-lysine biosynthesis via DAP pathway; L-lysine from DL-2,6-diaminopimelate: step 1/1. Specifically catalyzes the decarboxylation of meso-diaminopimelate (meso-DAP) to L-lysine. The polypeptide is Diaminopimelate decarboxylase (Synechocystis sp. (strain ATCC 27184 / PCC 6803 / Kazusa)).